Reading from the N-terminus, the 465-residue chain is Putative F-box/LRR-repeat protein At3g28410 (465 aa).

One can recognise an F-box domain in the interval 27–73; sequence ADFINYMPDDILHHILSFIPTDLAMRTSVLSRRWRHVWCETPCLDIK. LRR repeat units lie at residues 127–155, 178–203, 207–225, 278–302, 332–357, 402–427, and 447–465; these read VRDFTYTKTYRFPDIFYISSSLKQLDVTL, FCQIPDESMHNILSGCPILESLTLDT, LERLDLSKSPNLRRLDINR, ADRYQTMALEMLSKFHNVKRLTVGE, FVRSVIPGISRLLQNSPGLKKLTLHT, TSKLVASFMNLVLRNAKTLERMVVWL, and VETLSHNNNVSILLKQSNC.

In Arabidopsis thaliana (Mouse-ear cress), this protein is Putative F-box/LRR-repeat protein At3g28410.